The following is a 302-amino-acid chain: Lipoyl synthase (302 aa).

Positions 54, 59, 65, 80, 84, 87, and 291 each coordinate [4Fe-4S] cluster. One can recognise a Radical SAM core domain in the interval 66–280; that stretch reads WSRKTATYML…RIYGKSIGFK (215 aa).

Belongs to the radical SAM superfamily. Lipoyl synthase family. [4Fe-4S] cluster is required as a cofactor.

Its subcellular location is the cytoplasm. The enzyme catalyses [[Fe-S] cluster scaffold protein carrying a second [4Fe-4S](2+) cluster] + N(6)-octanoyl-L-lysyl-[protein] + 2 oxidized [2Fe-2S]-[ferredoxin] + 2 S-adenosyl-L-methionine + 4 H(+) = [[Fe-S] cluster scaffold protein] + N(6)-[(R)-dihydrolipoyl]-L-lysyl-[protein] + 4 Fe(3+) + 2 hydrogen sulfide + 2 5'-deoxyadenosine + 2 L-methionine + 2 reduced [2Fe-2S]-[ferredoxin]. It participates in protein modification; protein lipoylation via endogenous pathway; protein N(6)-(lipoyl)lysine from octanoyl-[acyl-carrier-protein]: step 2/2. Its function is as follows. Catalyzes the radical-mediated insertion of two sulfur atoms into the C-6 and C-8 positions of the octanoyl moiety bound to the lipoyl domains of lipoate-dependent enzymes, thereby converting the octanoylated domains into lipoylated derivatives. This chain is Lipoyl synthase, found in Leptospira borgpetersenii serovar Hardjo-bovis (strain JB197).